A 228-amino-acid polypeptide reads, in one-letter code: Lipoprotein-releasing system ATP-binding protein LolD (228 aa).

The ABC transporter domain maps to 7–227; sequence LQLSGIERHY…TIEDGKVVEL (221 aa). Residue 43-50 participates in ATP binding; it reads APSGTGKS.

This sequence belongs to the ABC transporter superfamily. Lipoprotein translocase (TC 3.A.1.125) family. In terms of assembly, the complex is composed of two ATP-binding proteins (LolD) and two transmembrane proteins (LolC and LolE).

Its subcellular location is the cell inner membrane. In terms of biological role, part of the ABC transporter complex LolCDE involved in the translocation of mature outer membrane-directed lipoproteins, from the inner membrane to the periplasmic chaperone, LolA. Responsible for the formation of the LolA-lipoprotein complex in an ATP-dependent manner. The protein is Lipoprotein-releasing system ATP-binding protein LolD of Rhizobium meliloti (strain 1021) (Ensifer meliloti).